Here is a 126-residue protein sequence, read N- to C-terminus: Histone H2B type 1-O (126 aa).

Over residues 1 to 12 (MPDPAKSAPAPK) the composition is skewed to low complexity. Residues 1–35 (MPDPAKSAPAPKKGSKKAVTKAQKKDGKKRKRSRK) form a disordered region. Residue P2 is modified to N-acetylproline; partial. An N6-(2-hydroxyisobutyryl)lysine; alternate modification is found at K6. At K6 the chain carries N6-(beta-hydroxybutyryl)lysine; alternate. Residue K6 is modified to N6-acetyllysine; alternate. K6 bears the N6-butyryllysine; alternate mark. K6 carries the N6-crotonyllysine; alternate modification. Residue K6 is modified to N6-lactoyllysine; alternate. K6 is covalently cross-linked (Glycyl lysine isopeptide (Lys-Gly) (interchain with G-Cter in SUMO2); alternate). S7 carries the ADP-ribosylserine modification. Position 12 is an N6-(beta-hydroxybutyryl)lysine; alternate (K12). K12 and K13 each carry N6-acetyllysine; alternate. N6-crotonyllysine; alternate occurs at positions 12 and 13. K12 is modified (N6-lactoyllysine; alternate). Residue K13 is modified to N6-(2-hydroxyisobutyryl)lysine; alternate. At S15 the chain carries Phosphoserine; by STK4/MST1. K16, K17, K21, and K24 each carry N6-acetyllysine; alternate. 4 positions are modified to N6-crotonyllysine; alternate: K16, K17, K21, and K24. An N6-lactoyllysine; alternate mark is found at K16, K17, K21, and K24. N6-(beta-hydroxybutyryl)lysine; alternate occurs at positions 17 and 21. K17 bears the N6-glutaryllysine; alternate mark. N6-(2-hydroxyisobutyryl)lysine; alternate occurs at positions 21 and 24. K21 is subject to N6-butyryllysine; alternate. K21 participates in a covalent cross-link: Glycyl lysine isopeptide (Lys-Gly) (interchain with G-Cter in SUMO2); alternate. K25 is subject to N6-(2-hydroxyisobutyryl)lysine. An N6-(2-hydroxyisobutyryl)lysine; alternate modification is found at K35. N6-(beta-hydroxybutyryl)lysine; alternate is present on K35. At K35 the chain carries N6-crotonyllysine; alternate. Residue K35 is modified to N6-glutaryllysine; alternate. The residue at position 35 (K35) is an N6-succinyllysine; alternate. Residue K35 forms a Glycyl lysine isopeptide (Lys-Gly) (interchain with G-Cter in ubiquitin); alternate linkage. A PolyADP-ribosyl glutamic acid modification is found at E36. At S37 the chain carries Phosphoserine; by AMPK. N6-(2-hydroxyisobutyryl)lysine; alternate occurs at positions 44, 47, and 58. Residue K44 is modified to N6-lactoyllysine; alternate. K44 and K47 each carry N6-glutaryllysine; alternate. Residue K47 is modified to N6-methyllysine; alternate. K58 bears the N6,N6-dimethyllysine; alternate mark. Residue R80 is modified to Dimethylated arginine. At K86 the chain carries N6-(2-hydroxyisobutyryl)lysine; alternate. K86 is modified (N6-(beta-hydroxybutyryl)lysine; alternate). The residue at position 86 (K86) is an N6-acetyllysine; alternate. K86 carries the N6-lactoyllysine; alternate modification. An N6,N6,N6-trimethyllysine; alternate modification is found at K86. Omega-N-methylarginine is present on residues R87 and R93. N6-(2-hydroxyisobutyryl)lysine; alternate is present on K109. Position 109 is an N6-lactoyllysine; alternate (K109). K109 carries the N6-glutaryllysine; alternate modification. K109 carries the post-translational modification N6-methyllysine; alternate. O-linked (GlcNAc) serine glycosylation is present at S113. The residue at position 116 (T116) is a Phosphothreonine. 2 positions are modified to N6-(2-hydroxyisobutyryl)lysine; alternate: K117 and K121. K117 and K121 each carry N6-(beta-hydroxybutyryl)lysine; alternate. N6-lactoyllysine; alternate occurs at positions 117 and 121. N6-glutaryllysine; alternate occurs at positions 117 and 121. N6-succinyllysine; alternate occurs at positions 117 and 121. Position 117 is an N6-malonyllysine; alternate (K117). An N6-methylated lysine; alternate modification is found at K117. K121 is covalently cross-linked (Glycyl lysine isopeptide (Lys-Gly) (interchain with G-Cter in ubiquitin); alternate).

Belongs to the histone H2B family. As to quaternary structure, the nucleosome is a histone octamer containing two molecules each of H2A, H2B, H3 and H4 assembled in one H3-H4 heterotetramer and two H2A-H2B heterodimers. The octamer wraps approximately 147 bp of DNA. Monoubiquitination at Lys-35 (H2BK34Ub) by the MSL1/MSL2 dimer is required for histone H3 'Lys-4' (H3K4me) and 'Lys-79' (H3K79me) methylation and transcription activation at specific gene loci, such as HOXA9 and MEIS1 loci. Similarly, monoubiquitination at Lys-121 (H2BK120Ub) by the RNF20/40 complex gives a specific tag for epigenetic transcriptional activation and is also prerequisite for histone H3 'Lys-4' and 'Lys-79' methylation. It also functions cooperatively with the FACT dimer to stimulate elongation by RNA polymerase II. H2BK120Ub also acts as a regulator of mRNA splicing: deubiquitination by USP49 is required for efficient cotranscriptional splicing of a large set of exons. In terms of processing, phosphorylation at Ser-37 (H2BS36ph) by AMPK in response to stress promotes transcription. Phosphorylated on Ser-15 (H2BS14ph) by STK4/MST1 during apoptosis; which facilitates apoptotic chromatin condensation. Also phosphorylated on Ser-15 in response to DNA double strand breaks (DSBs), and in correlation with somatic hypermutation and immunoglobulin class-switch recombination. Post-translationally, glcNAcylation at Ser-113 promotes monoubiquitination of Lys-121. It fluctuates in response to extracellular glucose, and associates with transcribed genes. ADP-ribosylated by PARP1 or PARP2 on Ser-7 (H2BS6ADPr) in response to DNA damage. H2BS6ADPr promotes recruitment of CHD1L. Poly ADP-ribosylation on Glu-36 (H2BE35ADPr) by PARP1 regulates adipogenesis: it inhibits phosphorylation at Ser-37 (H2BS36ph), thereby blocking expression of pro-adipogenetic genes. In terms of processing, crotonylation (Kcr) is specifically present in male germ cells and marks testis-specific genes in post-meiotic cells, including X-linked genes that escape sex chromosome inactivation in haploid cells. Crotonylation marks active promoters and enhancers and confers resistance to transcriptional repressors. It is also associated with post-meiotically activated genes on autosomes. Post-translationally, lactylated in macrophages by EP300/P300 by using lactoyl-CoA directly derived from endogenous or exogenous lactate, leading to stimulates gene transcription.

The protein resides in the nucleus. It localises to the chromosome. Core component of nucleosome. Nucleosomes wrap and compact DNA into chromatin, limiting DNA accessibility to the cellular machineries which require DNA as a template. Histones thereby play a central role in transcription regulation, DNA repair, DNA replication and chromosomal stability. DNA accessibility is regulated via a complex set of post-translational modifications of histones, also called histone code, and nucleosome remodeling. This Homo sapiens (Human) protein is Histone H2B type 1-O.